Reading from the N-terminus, the 361-residue chain is Peptide chain release factor 1 (361 aa).

At Gln237 the chain carries N5-methylglutamine. Positions 286–296 (EKRRSAEESTR) are enriched in basic and acidic residues. Residues 286–305 (EKRRSAEESTRRNLVSSGDR) form a disordered region.

It belongs to the prokaryotic/mitochondrial release factor family. In terms of processing, methylated by PrmC. Methylation increases the termination efficiency of RF1.

It localises to the cytoplasm. In terms of biological role, peptide chain release factor 1 directs the termination of translation in response to the peptide chain termination codons UAG and UAA. This chain is Peptide chain release factor 1, found in Shewanella pealeana (strain ATCC 700345 / ANG-SQ1).